A 316-amino-acid chain; its full sequence is MRELKIFSGRANHDLAEKLCRHLHLKPARITLGQFPDGENYCKLDEDVRGRDVFLVQPTCPPVNDNLIELLTMIDCCKRASAERITAVIPYFGYARQDRKDEGRVPITAKLVANLITRAGADRVLTMDLHAAQIQGFFDVPVDHLYAAPVINDHFVSRRFAGDEVVVVSPDEGSIKRALGHTKRLGGNLAIVDKRRTNALEVRQNTIIGGPVEGKVALMFDDMISTAGSICGAARLVHEAGAKEIHIACTHGVLCGPAIERLREAPIDSITVTDTIPVTGEKLLPNLVQLSVAPLLAEAIKRIHHDQSISELFRER.

Residues Asp37–Glu39 and Arg96–Gln97 contribute to the ATP site. The Mg(2+) site is built by His130 and Asp171. The active site involves Lys194. The D-ribose 5-phosphate site is built by Arg196 and Asp221.

The protein belongs to the ribose-phosphate pyrophosphokinase family. Class I subfamily. In terms of assembly, homohexamer. Mg(2+) is required as a cofactor.

It localises to the cytoplasm. It carries out the reaction D-ribose 5-phosphate + ATP = 5-phospho-alpha-D-ribose 1-diphosphate + AMP + H(+). The protein operates within metabolic intermediate biosynthesis; 5-phospho-alpha-D-ribose 1-diphosphate biosynthesis; 5-phospho-alpha-D-ribose 1-diphosphate from D-ribose 5-phosphate (route I): step 1/1. Its function is as follows. Involved in the biosynthesis of the central metabolite phospho-alpha-D-ribosyl-1-pyrophosphate (PRPP) via the transfer of pyrophosphoryl group from ATP to 1-hydroxyl of ribose-5-phosphate (Rib-5-P). In Rhodopirellula baltica (strain DSM 10527 / NCIMB 13988 / SH1), this protein is Ribose-phosphate pyrophosphokinase.